We begin with the raw amino-acid sequence, 233 residues long: Large ribosomal subunit protein uL1 (233 aa).

It belongs to the universal ribosomal protein uL1 family. Part of the 50S ribosomal subunit.

In terms of biological role, binds directly to 23S rRNA. The L1 stalk is quite mobile in the ribosome, and is involved in E site tRNA release. Its function is as follows. Protein L1 is also a translational repressor protein, it controls the translation of the L11 operon by binding to its mRNA. In Finegoldia magna (strain ATCC 29328 / DSM 20472 / WAL 2508) (Peptostreptococcus magnus), this protein is Large ribosomal subunit protein uL1.